Consider the following 87-residue polypeptide: Sec-independent protein translocase protein TatA (87 aa).

A helical transmembrane segment spans residues 1-21 (MGSFSITHWLILLVVVVVVFG). The disordered stretch occupies residues 56–87 (VLDHDAGTNPPNITGTQSDTTSANKVDDTHNV). Positions 64–79 (NPPNITGTQSDTTSAN) are enriched in polar residues.

This sequence belongs to the TatA/E family. As to quaternary structure, the Tat system comprises two distinct complexes: a TatABC complex, containing multiple copies of TatA, TatB and TatC subunits, and a separate TatA complex, containing only TatA subunits. Substrates initially bind to the TatABC complex, which probably triggers association of the separate TatA complex to form the active translocon.

The protein localises to the cell inner membrane. Part of the twin-arginine translocation (Tat) system that transports large folded proteins containing a characteristic twin-arginine motif in their signal peptide across membranes. TatA could form the protein-conducting channel of the Tat system. The sequence is that of Sec-independent protein translocase protein TatA from Psychrobacter arcticus (strain DSM 17307 / VKM B-2377 / 273-4).